The following is a 214-amino-acid chain: Redox-sensing transcriptional repressor Rex (214 aa).

Positions 17 to 56 form a DNA-binding region, H-T-H motif; the sequence is LYYRIFKRFHADQVEKASSKQIADAMGIDSATVRRDFSYF. 91 to 96 is an NAD(+) binding site; sequence GCGNIG.

This sequence belongs to the transcriptional regulatory Rex family. In terms of assembly, homodimer.

It localises to the cytoplasm. Its function is as follows. Modulates transcription in response to changes in cellular NADH/NAD(+) redox state. The polypeptide is Redox-sensing transcriptional repressor Rex (Streptococcus pyogenes serotype M12 (strain MGAS9429)).